A 265-amino-acid chain; its full sequence is Insulin-like growth factor-binding protein 5 (265 aa).

Residues M1–A21 form the signal peptide. Residues S24–L104 enclose the IGFBP N-terminal domain. Intrachain disulfides connect C28-C54, C31-C56, C39-C57, C46-C60, C68-C81, and C75-C101. Residues S111–D121 show a composition bias toward basic and acidic residues. The interval S111–G137 is disordered. The 75-residue stretch at M182–C256 folds into the Thyroglobulin type-1 domain. 3 disulfide bridges follow: C185–C212, C223–C234, and C236–C256.

Its subcellular location is the secreted. IGF-binding proteins prolong the half-life of the IGFs and have been shown to either inhibit or stimulate the growth promoting effects of the IGFs on cell culture. They alter the interaction of IGFs with their cell surface receptors. Promotes anterior neural development by stimulating insulin growth factor (IGF) signaling via IGF receptors. This chain is Insulin-like growth factor-binding protein 5, found in Xenopus laevis (African clawed frog).